A 273-amino-acid polypeptide reads, in one-letter code: MMSMDEMRGNYDSNSYKSADHDCHKDCGRVIESQTLPLCEGTNITPTAVTTPVVAKIPVVLAEKEVQIDVEARMKLKEKFFEIKRIKKDVFLTQCELLPRAGVIENGVPITGKLFLSGFVRKNIEFATADCVKHDVVSGEIKHTTEKIPFTCVTEVTYITPPILGNRGIQQKTDLFCGRCDCECECEEERLGKLTCEEFLEDSITLVEKPFCELLGARIFEADIQRKPCYEHGEKVFDELLEKMVVHIRVKVLQLQQVAVNDTDAGTGSMCRK.

It is found in the spore wall. The chain is Exosporium protein C from Clostridium sporogenes (strain ATCC 15579).